The primary structure comprises 346 residues: Calcium homeostasis modulator protein 1 (346 aa).

The Cytoplasmic segment spans residues 1-21; sequence MMDKFRMIFQFLQSNQESFMN. A central pore region spans residues 10–37; the sequence is QFLQSNQESFMNGICGIMALASAQMYSA. The chain crosses the membrane as a helical span at residues 22–37; that stretch reads GICGIMALASAQMYSA. The Extracellular segment spans residues 38–49; sequence FDFNCPCLPGYN. Intrachain disulfides connect cysteine 42–cysteine 127 and cysteine 44–cysteine 161. A helical transmembrane segment spans residues 50–72; sequence AAYSAGILLAPPLVLFLLGLVMN. Residues 63–70 form a phospholipid-binding region; sequence VLFLLGLV. Residues 73–99 lie on the Cytoplasmic side of the membrane; that stretch reads NNVSMLAEEWKRPLGRRAKDPAVLRYM. The helical transmembrane segment at 100–125 threads the bilayer; that stretch reads FCSMAQRALIAPVVWVAVTLLDGKCF. Cysteine 101 is lipidated: S-palmitoyl cysteine. The interval 105–117 is phospholipid-binding; the sequence is QRALIAPVVWVAV. Over 126–180 the chain is Extracellular; that stretch reads LCAFCTAVPVSALGNGSLAPGLPAPELARLLARVPCPEIYDGDWLLAREVAVRYL. N-linked (GlcNAc...) asparagine glycosylation is present at asparagine 140. Residues 181–206 form a helical membrane-spanning segment; sequence RCISQALGWSFVLLTTLLAFVVRSVR. The tract at residues 192 to 202 is phospholipid-binding; sequence VLLTTLLAFVV. Residues 207–346 are Cytoplasmic-facing; sequence PCFTQAAFLK…KEVATYFSKV (140 aa). The S-palmitoyl cysteine moiety is linked to residue cysteine 208. Positions 313–346 are disordered; the sequence is LRLGQEEPPLMGNGWAGGGPRPPRKEVATYFSKV.

The protein belongs to the CALHM family. Oligomerizes to form hexamers and octamers. Does not form gap junctions. Associates with CALHM3 as a pore-forming subunit in a hetero-hexameric channel complex. N-glycosylated. Assembly with CALHM3 is associated with N-glycan remodeling and formation of hybrid complex- and high mannose-type glycochains. This N-glycan processing regulates channel trafficking and gating kinetics. Post-translationally, palmitoylated by ZDHHC3, ZDHHC20 and possibly ZDHHC7. Palmitoylation regulates voltage-dependent gating of the channel by shifting it toward more depolarized potentials. In terms of tissue distribution, predominantly expressed in adult brain. Detected also in retinoic acid-differentiated SH-SY5Y cells. Specifically expressed in circumvallate taste bud cells.

The protein localises to the cell membrane. It localises to the endoplasmic reticulum membrane. It is found in the basolateral cell membrane. The enzyme catalyses ATP(in) = ATP(out). It carries out the reaction Ca(2+)(in) = Ca(2+)(out). It catalyses the reaction Mg(2+)(in) = Mg(2+)(out). The catalysed reaction is Na(+)(in) = Na(+)(out). The enzyme catalyses K(+)(in) = K(+)(out). It carries out the reaction Li(+)(in) = Li(+)(out). It catalyses the reaction Rb(+)(in) = Rb(+)(out). The catalysed reaction is Cs(+)(in) = Cs(+)(out). The enzyme catalyses chloride(in) = chloride(out). With respect to regulation, regulated by membrane voltage and extracellular Ca(2+). Inhibited by Gd(3+), ruthenium red, and Zn(2+) and partially inhibited by 2-aminoethoxydiphenyl borate. Pore-forming subunit of gustatory voltage-gated ion channels required for sensory perception of sweet, bitter and umami tastes. With CALHM3 forms a fast-activating voltage-gated ATP-release channel in type II taste bud cells, ATP acting as a neurotransmitter to activate afferent neural gustatory pathways. Acts both as a voltage-gated and calcium-activated ion channel: mediates neuronal excitability in response to membrane depolarization and low extracellular Ca(2+) concentration. Has poor ion selectivity and forms a wide pore (around 14 Angstroms) that mediates permeation of small ions including Ca(2+), Na(+), K(+) and Cl(-), as well as larger ions such as ATP(4-). Mediates Ca(2+) influx and downstream activation of the ERK1 and ERK2 cascade in neurons. Triggers endoplasmic reticulum stress by reducing the Ca(2+) content of the endoplasmic reticulum. May indirectly control amyloid precursor protein (APP) proteolysis and aggregated amyloid-beta (Abeta) peptides levels in a Ca(2+)-dependent manner. This Homo sapiens (Human) protein is Calcium homeostasis modulator protein 1.